Here is a 274-residue protein sequence, read N- to C-terminus: Probable WRKY transcription factor 49 (274 aa).

The WRKY DNA-binding region spans 108–173; sequence NSNGMCDDGY…YEGFHFHYTY (66 aa). A disordered region spans residues 188-228; that stretch reads KTKIHKHNAQDMNKKSQTQEESKEAQLGELTNQNHPVNKAQ. The stretch at 193 to 222 forms a coiled coil; it reads KHNAQDMNKKSQTQEESKEAQLGELTNQNH. Residues 195-213 show a composition bias toward basic and acidic residues; it reads NAQDMNKKSQTQEESKEAQ. A compositionally biased stretch (polar residues) spans 216–228; the sequence is ELTNQNHPVNKAQ.

This sequence belongs to the WRKY group II-c family.

The protein localises to the nucleus. Functionally, transcription factor. Interacts specifically with the W box (5'-(T)TGAC[CT]-3'), a frequently occurring elicitor-responsive cis-acting element. The chain is Probable WRKY transcription factor 49 (WRKY49) from Arabidopsis thaliana (Mouse-ear cress).